Here is a 115-residue protein sequence, read N- to C-terminus: Large ribosomal subunit protein bL20 (115 aa).

The protein belongs to the bacterial ribosomal protein bL20 family.

Functionally, binds directly to 23S ribosomal RNA and is necessary for the in vitro assembly process of the 50S ribosomal subunit. It is not involved in the protein synthesizing functions of that subunit. The protein is Large ribosomal subunit protein bL20 of Prochlorococcus marinus (strain NATL2A).